The sequence spans 781 residues: Minor capsid protein VP1 (781 aa).

The binding to the host cell receptor and internalization stretch occupies residues Ser5–His80. Positions Tyr77–Ser111 are disordered. A phospholipase A2-like region spans residues Val123 to Asn181. Composition is skewed to polar residues over residues Val524 to Gly535 and Gly542 to Ile553. The segment at Val524–Ser561 is disordered. A Nuclear localization signal motif is present at residues Lys720 to Trp730.

Belongs to the parvoviridae capsid protein family. As to quaternary structure, heteromultimer of isoform Minor capsid protein VP1, isoform Minor capsid protein VP2 and isoform Major capsid protein VP3. In terms of assembly, heteromultimer of isoform Minor capsid protein VP1, isoform Minor capsid protein VP2 and isoform Major capsid protein VP3. 20 fold more abundant than the minor capsid protein VP1.

It is found in the virion. The protein resides in the host nucleus. Its subcellular location is the host cytoplasm. The catalysed reaction is a 1,2-diacyl-sn-glycero-3-phosphocholine + H2O = a 1-acyl-sn-glycero-3-phosphocholine + a fatty acid + H(+). In terms of biological role, capsid protein self-assembles to form an icosahedral capsid with a T=1 symmetry, about 20 nm in diameter, and consisting of 60 copies of two size variants of the capsid proteins, VP1 and VP2, which differ by the presence of an N-terminal extension in the minor protein VP1. The capsid encapsulates the genomic ssDNA. Binds to erythroid progenitor cells expressing high levels of P antigen and uses host ITGA5-ITGB1 and XRCC5/Ku80 autoantigen as coreceptors on the cell surface to provide virion attachment to target cell. This attachment induces virion internalization predominantly through clathrin-dependent endocytosis. Binding to the host receptors also induces capsid rearrangements leading to surface exposure of VP1 N-terminus, specifically its phospholipase A2-like region. The additional N-terminal region of isoform Minor capsid protein VP1, called VP1u, may serve as a lipolytic enzyme to breach the endosomal membrane during entry into host cell and might contribute to virus transport to the nucleus. The chain is Minor capsid protein VP1 (vp) from Human parvovirus B19 (strain HV) (HPV B19).